The primary structure comprises 397 residues: Tryptophan synthase beta chain (397 aa).

At Lys-91 the chain carries N6-(pyridoxal phosphate)lysine.

Belongs to the TrpB family. Tetramer of two alpha and two beta chains. Pyridoxal 5'-phosphate is required as a cofactor.

The enzyme catalyses (1S,2R)-1-C-(indol-3-yl)glycerol 3-phosphate + L-serine = D-glyceraldehyde 3-phosphate + L-tryptophan + H2O. It functions in the pathway amino-acid biosynthesis; L-tryptophan biosynthesis; L-tryptophan from chorismate: step 5/5. The beta subunit is responsible for the synthesis of L-tryptophan from indole and L-serine. In Bacillus cereus (strain ZK / E33L), this protein is Tryptophan synthase beta chain.